Reading from the N-terminus, the 479-residue chain is Sulfate adenylyltransferase subunit 1 (479 aa).

The tr-type G domain occupies 25–239; that stretch reads KSLLRFLTCG…EVLETVDIQR (215 aa). A G1 region spans residues 34 to 41; the sequence is GSVDDGKS. 34–41 is a binding site for GTP; it reads GSVDDGKS. The G2 stretch occupies residues 92–96; the sequence is GITID. Residues 113–116 are G3; it reads DTPG. Residues 113–117 and 168–171 each bind GTP; these read DTPGH and NKMD. The G4 stretch occupies residues 168 to 171; that stretch reads NKMD. Residues 206–208 are G5; sequence SAL.

Belongs to the TRAFAC class translation factor GTPase superfamily. Classic translation factor GTPase family. CysN/NodQ subfamily. As to quaternary structure, heterodimer composed of CysD, the smaller subunit, and CysN.

It carries out the reaction sulfate + ATP + H(+) = adenosine 5'-phosphosulfate + diphosphate. It functions in the pathway sulfur metabolism; hydrogen sulfide biosynthesis; sulfite from sulfate: step 1/3. Its function is as follows. With CysD forms the ATP sulfurylase (ATPS) that catalyzes the adenylation of sulfate producing adenosine 5'-phosphosulfate (APS) and diphosphate, the first enzymatic step in sulfur assimilation pathway. APS synthesis involves the formation of a high-energy phosphoric-sulfuric acid anhydride bond driven by GTP hydrolysis by CysN coupled to ATP hydrolysis by CysD. The sequence is that of Sulfate adenylyltransferase subunit 1 from Salmonella typhimurium (strain LT2 / SGSC1412 / ATCC 700720).